A 64-amino-acid polypeptide reads, in one-letter code: Lantipeptide Flvbeta.d (64 aa).

The propeptide at 1-31 (MDNNTEKFNELAAIADESELNEMLDENITGA) is cleaved by FlvT. Residues 33 to 37 (STIQC) constitute a cross-link (lanthionine (Ser-Cys); by FlvM2). 2,3-didehydrobutyrine; by FlvM2 is present on residues Thr34 and Thr41. Cross-links (beta-methyllanthionine (Thr-Cys); by FlvM2) lie at residues 44–52 (TILSVVFDC), 55–58 (TSAC), and 59–62 (TPPC). A cross-link (lanthionine (Ser-Cys); by FlvM2) is located at residues 47 to 53 (SVVFDCC).

Post-translationally, contains LL-lanthionine, DL-lanthionine, and DL-beta-methyllanthionine, when coepressed in E.coli with the flavecin synthetase FlvM2.

Its subcellular location is the secreted. Its function is as follows. Lanthionine-containing peptide that does probably not show antibacterial activity, since its analog [+2]Flvbeta.d does not show antibacterial activity against M.luteus. Also does not show antibiotic activity when tested with [Del2]Flvalpha.a, an analog of Flvalpha.a, which is encoded by the same operon than Flvbeta.d. The bactericidal activity of lantibiotics is based on depolarization of energized bacterial cytoplasmic membranes, initiated by the formation of aqueous transmembrane pores. This is Lantipeptide Flvbeta.d from Ruminococcus flavefaciens.